Here is a 224-residue protein sequence, read N- to C-terminus: E3 ubiquitin-protein ligase TRIM48 (224 aa).

The segment at 31–72 (CPICMNYFIDPVTIDCGHSFCRPCFYLNWQDIPILTQCFECI) adopts an RING-type zinc-finger fold. A B box-type zinc finger spans residues 104–145 (SEEQMCGIHRETKKMFCEVDRSLLCLLCSSSQEHRYHRHCPA). Cys-109, His-112, Cys-131, and His-137 together coordinate Zn(2+).

It belongs to the TRIM/RBCC family. Interacts with PRMT1; the interaction leads to ubiquitination of PRMT1 by TRIM48. Interacts with MAP3K5. Interacts with STRAP.

The protein resides in the cytoplasm. It is found in the cytosol. The catalysed reaction is S-ubiquitinyl-[E2 ubiquitin-conjugating enzyme]-L-cysteine + [acceptor protein]-L-lysine = [E2 ubiquitin-conjugating enzyme]-L-cysteine + N(6)-ubiquitinyl-[acceptor protein]-L-lysine.. In terms of biological role, E3 ubiquitin-protein ligase which promotes K48-linked polyubiquitination of protein methyltransferase PRMT1, leading to PRMT1 degradation. This suppresses methylation of the PRMT1 substrate MAP3K5/ASK1, promoting its activation and increasing MAP3K5-dependent cell death induced by oxidative stress. TRIM48-mediated ubiquitination of PRMT1 also suppresses methylation of FOXO1 by PRMT1, leading to inhibition of FOXO1 transcriptional activity. This is E3 ubiquitin-protein ligase TRIM48 from Homo sapiens (Human).